A 318-amino-acid chain; its full sequence is Trans-prenyltransferase (318 aa).

Residues 1–21 (MLHLIYISIIVVLIIILISYT) form a helical membrane-spanning segment. Isopentenyl diphosphate is bound by residues Lys-85, Arg-88, and His-122. Residues Asp-129 and Asp-135 each coordinate Mg(2+). Position 140 (Arg-140) interacts with dimethylallyl diphosphate. Arg-141 is a binding site for isopentenyl diphosphate. Residues Lys-216, Thr-217, and Gln-254 each coordinate dimethylallyl diphosphate.

It belongs to the FPP/GGPP synthase family. Asfivirus trans-prenyltransferase subfamily. Requires Mg(2+) as cofactor.

The protein resides in the host endoplasmic reticulum. Its subcellular location is the host membrane. The enzyme catalyses isopentenyl diphosphate + dimethylallyl diphosphate = (2E)-geranyl diphosphate + diphosphate. It carries out the reaction isopentenyl diphosphate + (2E)-geranyl diphosphate = (2E,6E)-farnesyl diphosphate + diphosphate. It catalyses the reaction isopentenyl diphosphate + (2E,6E)-farnesyl diphosphate = (2E,6E,10E)-geranylgeranyl diphosphate + diphosphate. The catalysed reaction is isopentenyl diphosphate + (2E,6E,10E)-geranylgeranyl diphosphate = (2E,6E,10E,14E)-geranylfarnesyl diphosphate + diphosphate. Its pathway is isoprenoid biosynthesis; farnesyl diphosphate biosynthesis; farnesyl diphosphate from geranyl diphosphate and isopentenyl diphosphate: step 1/1. It functions in the pathway isoprenoid biosynthesis; geranyl diphosphate biosynthesis; geranyl diphosphate from dimethylallyl diphosphate and isopentenyl diphosphate: step 1/1. The protein operates within isoprenoid biosynthesis; geranylgeranyl diphosphate biosynthesis; geranylgeranyl diphosphate from farnesyl diphosphate and isopentenyl diphosphate: step 1/1. Functionally, trans-prenyltransferase that catalyzes the sequential condensation of isopentenyl diphosphate (IPP) with different allylic diphosphates, such as dimethylallyl diphosphate (DMAPP), geranyl diphosphate (GPP), farnesyl diphosphate (FPP) and geranylgeranyl diphosphate (GGPP), farnesyl diphosphate being the best allylic substrate. The sequence is that of Trans-prenyltransferase from African swine fever virus (strain Badajoz 1971 Vero-adapted) (Ba71V).